Consider the following 339-residue polypeptide: tRNA-splicing endonuclease (339 aa).

Active-site residues include Tyr274, His285, and Lys316.

This sequence belongs to the tRNA-intron endonuclease family. Archaeal long subfamily. In terms of assembly, homodimer. Requires Ca(2+) as cofactor. The cofactor is Mg(2+). Post-translationally, the N-terminus is blocked.

It catalyses the reaction pretRNA = a 3'-half-tRNA molecule with a 5'-OH end + a 5'-half-tRNA molecule with a 2',3'-cyclic phosphate end + an intron with a 2',3'-cyclic phosphate and a 5'-hydroxyl terminus.. Endonuclease that removes tRNA introns. Cleaves pre-tRNA at the 5'- and 3'-splice sites to release the intron. The products are an intron and two tRNA half-molecules bearing 2',3' cyclic phosphate and 5'-OH termini. Recognizes a pseudosymmetric substrate in which 2 bulged loops of 3 bases are separated by a stem of 4 bp. The chain is tRNA-splicing endonuclease from Haloferax volcanii (strain ATCC 29605 / DSM 3757 / JCM 8879 / NBRC 14742 / NCIMB 2012 / VKM B-1768 / DS2) (Halobacterium volcanii).